We begin with the raw amino-acid sequence, 1130 residues long: Sterol regulatory element-binding protein 2 (1130 aa).

Residues 1–50 (MDESSELGVLETMETLTELGDELTLGDIDEMLQFVSNQVGEFPDLFSEQL) are transcriptional activation (acidic). Over 1–470 (MDESSELGVL…VALGMVDRSR (470 aa)) the chain is Cytoplasmic. Residues 53–133 (SFPGGGSNGG…PQPQPQPPAQ (81 aa)) form a disordered region. A compositionally biased stretch (gly residues) spans 55 to 64 (PGGGSNGGSG). Residues 83 to 93 (RSFSQVPLSTF) are compositionally biased toward polar residues. Residues 94 to 104 (SPSAASPQAPA) are compositionally biased toward low complexity. Residues 111 to 131 (PTPPRATPVLQPRPQPQPQPP) show a composition bias toward pro residues. Residues 226–480 (QQVPVLVQPQ…ILLCVLTFLG (255 aa)) form an interaction with LMNA region. The bHLH domain maps to 319–369 (ERRTTHNIIEKRYRSSINDKIIELKDLVMGTDAKMHKSGVLRKAIDYIKYL). The segment at 369–390 (LQQVNHKLRQENMVLKLANQKN) is leucine-zipper. Residue lysine 453 forms a Glycyl lysine isopeptide (Lys-Gly) (interchain with G-Cter in SUMO2) linkage. Residues 471 to 491 (ILLCVLTFLGLSFNPLTSLLQ) traverse the membrane as a helical segment. Residues 492–522 (WGGAHNTDQHPYSGSGRSVLSLESGAGGWFD) are Lumenal-facing. Residues 523–543 (WMVPTLLLWLVNGVIVLSVFV) traverse the membrane as a helical segment. Topologically, residues 544-1130 (KLLVHGEPVI…LGGGTAIAAS (587 aa)) are cytoplasmic. The residue at position 1087 (serine 1087) is a Phosphoserine.

The protein belongs to the SREBP family. Forms a tight complex with SCAP, the SCAP-SREBP complex, in the endoplasmic reticulum membrane and the Golgi apparatus. Interacts with PAQR3; the interaction anchors the SCAP-SREBP complex to the Golgi apparatus in low cholesterol conditions. Interacts (via C-terminal domain) with RNF139. As to quaternary structure, homodimer; efficient DNA binding of the soluble transcription factor fragment requires dimerization with another bHLH protein. Interacts with LMNA. In terms of processing, processed in the Golgi apparatus, releasing the protein from the membrane. At low cholesterol the SCAP-SREBP complex is recruited into COPII vesicles for export from the endoplasmic reticulum. In the Golgi, complex SREBPs are cleaved sequentially by site-1 (MBTPS1, S1P) and site-2 (MBTPS2, S2P) proteases. The first cleavage by site-1 protease occurs within the luminal loop, the second cleavage by site-2 protease occurs within the first transmembrane domain, releasing the transcription factor from the Golgi membrane. Apoptosis triggers cleavage by the cysteine proteases caspase-3 and caspase-7. Cleavage and activation is induced by mediated cholesterol efflux. Phosphorylated by AMPK, leading to suppress protein processing and nuclear translocation, and repress target gene expression. Post-translationally, SCAP-free SREBF2 is ubiquitinated by the BCR(ARMC5) complex, leading to its degradation. In terms of processing, ubiquitinated; the nuclear form has a rapid turnover and is rapidly ubiquitinated and degraded by the proteasome in the nucleus.

Its subcellular location is the endoplasmic reticulum membrane. The protein localises to the golgi apparatus membrane. It is found in the cytoplasmic vesicle. The protein resides in the COPII-coated vesicle membrane. It localises to the nucleus. With respect to regulation, activation by cleavage is down-regulated upon activation of SIRT3-dependent PRKAA1/AMPK-alpha signaling cascade which leads to inhibition of ATP-consuming lipogenesis to restore cellular energy balance. Its function is as follows. Precursor of the transcription factor form (Processed sterol regulatory element-binding protein 2), which is embedded in the endoplasmic reticulum membrane. Low sterol concentrations promote processing of this form, releasing the transcription factor form that translocates into the nucleus and activates transcription of genes involved in cholesterol biosynthesis. In terms of biological role, key transcription factor that regulates expression of genes involved in cholesterol biosynthesis. Binds to the sterol regulatory element 1 (SRE-1) (5'-ATCACCCCAC-3'). Has dual sequence specificity binding to both an E-box motif (5'-ATCACGTGA-3') and to SRE-1 (5'-ATCACCCCAC-3'). Regulates transcription of genes related to cholesterol synthesis pathway. The polypeptide is Sterol regulatory element-binding protein 2 (Mus musculus (Mouse)).